Consider the following 474-residue polypeptide: PTS system N-acetylmuramic acid-specific EIIBC component (474 aa).

Residues 1–89 (MAKEISSELL…SELLGEAPVQ (89 aa)) enclose the PTS EIIB type-1 domain. The Cytoplasmic portion of the chain corresponds to 1 to 123 (MAKEISSELL…LAKFATIFTP (123 aa)). The active-site Phosphocysteine intermediate; for EIIB activity is the cysteine 29. The region spanning 115–474 (AKFATIFTPL…LFGCRNVNLD (360 aa)) is the PTS EIIC type-1 domain. A helical membrane pass occupies residues 124–144 (LIPGFIAAGLLLGIATLIATV). The Periplasmic portion of the chain corresponds to 145–157 (MHVPADAQGTLPD). Residues 158–178 (ALNFMKVFSKGLFTFLVILVG) traverse the membrane as a helical segment. Over 179-180 (YN) the chain is Cytoplasmic. A helical transmembrane segment spans residues 181–201 (AAQAFGGTGVNGAIIAALFLL). Over 202 to 217 (GYNPAATTGYYAGFHD) the chain is Periplasmic. The chain crosses the membrane as a helical span at residues 218–238 (FFGLPIDPRGNIIGVLIAAWA). Residues 239-260 (CARIEGMVRRFMPDDLDMLLTS) are Cytoplasmic-facing. Residues 261-281 (LITLLITATLAYLIIMPLGGW) traverse the membrane as a helical segment. The Periplasmic segment spans residues 282–301 (LFEGMSWLFMHLNSNPLGCA). A helical membrane pass occupies residues 302-322 (VLAGLFLIAVVFGVHQGFIPV). Topologically, residues 323–334 (YLALMDSQGFNS) are cytoplasmic. A helical membrane pass occupies residues 335-355 (LFPILSMAGAGQVGAALALYW). Over 356-368 (RAQPHSGLRSQVR) the chain is Periplasmic. A helical transmembrane segment spans residues 369–389 (GAIIPGLLGVGEPLIYGVTLP). The Cytoplasmic portion of the chain corresponds to 390-393 (RMKP). Residues 394–414 (FITACLGGAAGGLFIGLIAWW) traverse the membrane as a helical segment. The Periplasmic segment spans residues 415 to 440 (GLPMGLNSAFGPSGLVALPLMTSAQG). The helical transmembrane segment at 441-461 (ILPAMAIYAGGILVAWVCGFI) threads the bilayer. The Cytoplasmic segment spans residues 462–474 (FTTLFGCRNVNLD).

Its subcellular location is the cell inner membrane. It carries out the reaction N-acetyl-beta-D-muramate(out) + N(pros)-phospho-L-histidyl-[protein] = N-acetyl-beta-D-muramate 6-phosphate(in) + L-histidyl-[protein]. The phosphoenolpyruvate-dependent sugar phosphotransferase system (sugar PTS), a major carbohydrate active transport system, catalyzes the phosphorylation of incoming sugar substrates concomitantly with their translocation across the cell membrane. This system is involved in N-acetylmuramic acid (MurNAc) transport, yielding cytoplasmic MurNAc-6-P. Is also able to take up anhydro-N-acetylmuramic acid (anhMurNAc), but cannot phosphorylate the carbon 6, probably because of the 1,6-anhydro ring. The polypeptide is PTS system N-acetylmuramic acid-specific EIIBC component (murP) (Shigella dysenteriae serotype 1 (strain Sd197)).